We begin with the raw amino-acid sequence, 632 residues long: Extracellular metalloproteinase 2 (632 aa).

The N-terminal stretch at 1 to 19 (MHGLLLAGLAAALPLGVAG) is a signal peptide. The propeptide occupies 20-244 (LPARQQSGLS…VHNVVDYVAS (225 aa)). The N-linked (GlcNAc...) asparagine glycan is linked to N270. H429 lines the Zn(2+) pocket. E430 is an active-site residue. Residue H433 participates in Zn(2+) binding.

Belongs to the peptidase M36 family. It depends on Zn(2+) as a cofactor.

It is found in the secreted. Secreted metalloproteinase probably acting as a virulence factor. The sequence is that of Extracellular metalloproteinase 2 (MEP2) from Trichophyton tonsurans (Scalp ringworm fungus).